The chain runs to 257 residues: uncharacterized protein (257 aa).

Disordered regions lie at residues 86 to 119 and 182 to 206; these read SDEE…RPLS and STPL…TDGQ. Positions 196–206 are enriched in polar residues; sequence PTPTSQLTDGQ.

This is an uncharacterized protein from Invertebrate iridescent virus 3 (IIV-3).